The primary structure comprises 99 residues: Small ribosomal subunit protein uS14m (99 aa).

It belongs to the universal ribosomal protein uS14 family.

Its subcellular location is the mitochondrion. The polypeptide is Small ribosomal subunit protein uS14m (RPS14) (Marchantia polymorpha (Common liverwort)).